The chain runs to 498 residues: Acetyl-coenzyme A carboxylase carboxyl transferase subunit beta, chloroplastic (498 aa).

Positions 228 to 498 (LWVQCEICYG…LNHNLSRTLT (271 aa)) constitute a CoA carboxyltransferase N-terminal domain. Residues Cys-232, Cys-235, Cys-251, and Cys-254 each coordinate Zn(2+). Residues 232 to 254 (CEICYGLNYKKFFKSKMNICEQC) form a C4-type zinc finger.

It belongs to the AccD/PCCB family. As to quaternary structure, acetyl-CoA carboxylase is a heterohexamer composed of biotin carboxyl carrier protein, biotin carboxylase and 2 subunits each of ACCase subunit alpha and ACCase plastid-coded subunit beta (accD). Zn(2+) serves as cofactor.

The protein resides in the plastid. Its subcellular location is the chloroplast stroma. The enzyme catalyses N(6)-carboxybiotinyl-L-lysyl-[protein] + acetyl-CoA = N(6)-biotinyl-L-lysyl-[protein] + malonyl-CoA. The protein operates within lipid metabolism; malonyl-CoA biosynthesis; malonyl-CoA from acetyl-CoA: step 1/1. Its function is as follows. Component of the acetyl coenzyme A carboxylase (ACC) complex. Biotin carboxylase (BC) catalyzes the carboxylation of biotin on its carrier protein (BCCP) and then the CO(2) group is transferred by the transcarboxylase to acetyl-CoA to form malonyl-CoA. This chain is Acetyl-coenzyme A carboxylase carboxyl transferase subunit beta, chloroplastic, found in Populus trichocarpa (Western balsam poplar).